We begin with the raw amino-acid sequence, 203 residues long: Holliday junction branch migration complex subunit RuvA (203 aa).

Positions 1–63 (MIVSLRGTVE…EESQTLYGFT (63 aa)) are domain I. Positions 64–142 (DDASRRMFVL…GFNDGIPAAA (79 aa)) are domain II. The interval 143-150 (QPQLSIAV) is flexible linker. The domain III stretch occupies residues 150–203 (VDQAVQEQVLEALVGLGFSEKIALPVLSRVLRDSPELSKSQALRAALSELGTKN).

The protein belongs to the RuvA family. As to quaternary structure, homotetramer. Forms an RuvA(8)-RuvB(12)-Holliday junction (HJ) complex. HJ DNA is sandwiched between 2 RuvA tetramers; dsDNA enters through RuvA and exits via RuvB. An RuvB hexamer assembles on each DNA strand where it exits the tetramer. Each RuvB hexamer is contacted by two RuvA subunits (via domain III) on 2 adjacent RuvB subunits; this complex drives branch migration. In the full resolvosome a probable DNA-RuvA(4)-RuvB(12)-RuvC(2) complex forms which resolves the HJ.

The protein localises to the cytoplasm. The RuvA-RuvB-RuvC complex processes Holliday junction (HJ) DNA during genetic recombination and DNA repair, while the RuvA-RuvB complex plays an important role in the rescue of blocked DNA replication forks via replication fork reversal (RFR). RuvA specifically binds to HJ cruciform DNA, conferring on it an open structure. The RuvB hexamer acts as an ATP-dependent pump, pulling dsDNA into and through the RuvAB complex. HJ branch migration allows RuvC to scan DNA until it finds its consensus sequence, where it cleaves and resolves the cruciform DNA. This is Holliday junction branch migration complex subunit RuvA from Corynebacterium diphtheriae (strain ATCC 700971 / NCTC 13129 / Biotype gravis).